The following is a 339-amino-acid chain: Alcohol dehydrogenase notN (339 aa).

Zn(2+) contacts are provided by Cys44, His65, Glu66, Cys99, Cys102, Cys110, and Cys152. His65 contributes to the an alcohol binding site. Residues 176–181, 196–201, Lys204, 263–265, 287–289, and 295–297 contribute to the NAD(+) site; these read GLGGLG, VAISRG, LSF, PSG, and EDA.

Belongs to the zinc-containing alcohol dehydrogenase family. Zn(2+) is required as a cofactor.

It catalyses the reaction a primary alcohol + NAD(+) = an aldehyde + NADH + H(+). The catalysed reaction is a secondary alcohol + NAD(+) = a ketone + NADH + H(+). Functionally, alcohol dehydrogenase; part of the gene cluster that mediates the biosynthesis of notoamide, a fungal indole alkaloid that belongs to a family of natural products containing a characteristic bicyclo[2.2.2]diazaoctane core. The first step of notoamide biosynthesis involves coupling of L-proline and L-tryptophan by the bimodular NRPS notE, to produce cyclo-L-tryptophan-L-proline called brevianamide F. The reverse prenyltransferase notF then acts as a deoxybrevianamide E synthase and converts brevianamide F to deoxybrevianamide E via reverse prenylation at C-2 of the indole ring leading to the bicyclo[2.2.2]diazaoctane core. Deoxybrevianamide E is further hydroxylated at C-6 of the indole ring, likely catalyzed by the cytochrome P450 monooxygenase notG, to yield 6-hydroxy-deoxybrevianamide E. 6-hydroxy-deoxybrevianamide E is a specific substrate of the prenyltransferase notC for normal prenylation at C-7 to produce 6-hydroxy-7-prenyl-deoxybrevianamide, also called notoamide S. As the proposed pivotal branching point in notoamide biosynthesis, notoamide S can be diverted to notoamide E through an oxidative pyran ring closure putatively catalyzed by either notH cytochrome P450 monooxygenase or the notD FAD-linked oxidoreductase. This step would be followed by an indole 2,3-epoxidation-initiated pinacol-like rearrangement catalyzed by the notB FAD-dependent monooxygenase leading to the formation of notoamide C and notoamide D. On the other hand notoamide S is converted to notoamide T by notH (or notD), a bifunctional oxidase that also functions as the intramolecular Diels-Alderase responsible for generation of (+)-notoamide T. To generate antipodal (-)-notoaminide T, notH' (or notD') in Aspergillus versicolor is expected to catalyze a Diels-Alder reaction leading to the opposite stereochemistry. The remaining oxidoreductase notD (or notH) likely catalyzes the oxidative pyran ring formation to yield (+)-stephacidin A. The FAD-dependent monooxygenase notI is highly similar to notB and is predicted to catalyze a similar conversion from (+)-stephacidin A to (-)-notoamide B via the 2,3-epoxidation of (+)-stephacidin A followed by a pinacol-type rearrangement. Finally, it remains unclear which enzyme could be responsible for the final hydroxylation steps leading to notoamide A and sclerotiamide. The function of notN in the notoamide biosynthesis has not been determined yet. In Aspergillus sp. (strain MF297-2), this protein is Alcohol dehydrogenase notN.